Consider the following 118-residue polypeptide: NADH-ubiquinone oxidoreductase chain 3 (118 aa).

Transmembrane regions (helical) follow at residues 9 to 29, 62 to 82, and 87 to 107; these read IYLV…FLFA, LVSI…PWAV, and IDLF…IGFL.

Belongs to the complex I subunit 3 family.

The protein resides in the mitochondrion membrane. The catalysed reaction is a ubiquinone + NADH + 5 H(+)(in) = a ubiquinol + NAD(+) + 4 H(+)(out). In terms of biological role, core subunit of the mitochondrial membrane respiratory chain NADH dehydrogenase (Complex I) that is believed to belong to the minimal assembly required for catalysis. Complex I functions in the transfer of electrons from NADH to the respiratory chain. The immediate electron acceptor for the enzyme is believed to be ubiquinone. The polypeptide is NADH-ubiquinone oxidoreductase chain 3 (NAD3) (Pinus sylvestris (Scotch pine)).